A 464-amino-acid polypeptide reads, in one-letter code: tRNA(Ile2) 2-agmatinylcytidine synthetase TiaS (464 aa).

This sequence belongs to the TiaS family.

Its subcellular location is the cytoplasm. The enzyme catalyses cytidine(34) in tRNA(Ile2) + agmatine + ATP + H2O = 2-agmatinylcytidine(34) in tRNA(Ile2) + AMP + 2 phosphate + 2 H(+). ATP-dependent agmatine transferase that catalyzes the formation of 2-agmatinylcytidine (agm2C) at the wobble position (C34) of tRNA(Ile2), converting the codon specificity from AUG to AUA. In Ignisphaera aggregans (strain DSM 17230 / JCM 13409 / AQ1.S1), this protein is tRNA(Ile2) 2-agmatinylcytidine synthetase TiaS.